The sequence spans 488 residues: Probable glycine dehydrogenase (decarboxylating) subunit 2 (488 aa).

An N6-(pyridoxal phosphate)lysine modification is found at K274.

The protein belongs to the GcvP family. C-terminal subunit subfamily. As to quaternary structure, the glycine cleavage system is composed of four proteins: P, T, L and H. In this organism, the P 'protein' is a heterodimer of two subunits. It depends on pyridoxal 5'-phosphate as a cofactor.

The catalysed reaction is N(6)-[(R)-lipoyl]-L-lysyl-[glycine-cleavage complex H protein] + glycine + H(+) = N(6)-[(R)-S(8)-aminomethyldihydrolipoyl]-L-lysyl-[glycine-cleavage complex H protein] + CO2. In terms of biological role, the glycine cleavage system catalyzes the degradation of glycine. The P protein binds the alpha-amino group of glycine through its pyridoxal phosphate cofactor; CO(2) is released and the remaining methylamine moiety is then transferred to the lipoamide cofactor of the H protein. This chain is Probable glycine dehydrogenase (decarboxylating) subunit 2, found in Listeria monocytogenes serovar 1/2a (strain ATCC BAA-679 / EGD-e).